A 169-amino-acid polypeptide reads, in one-letter code: Peptide methionine sulfoxide reductase MsrA (169 aa).

Residue cysteine 10 is part of the active site.

Belongs to the MsrA Met sulfoxide reductase family.

It carries out the reaction L-methionyl-[protein] + [thioredoxin]-disulfide + H2O = L-methionyl-(S)-S-oxide-[protein] + [thioredoxin]-dithiol. The enzyme catalyses [thioredoxin]-disulfide + L-methionine + H2O = L-methionine (S)-S-oxide + [thioredoxin]-dithiol. Has an important function as a repair enzyme for proteins that have been inactivated by oxidation. Catalyzes the reversible oxidation-reduction of methionine sulfoxide in proteins to methionine. This chain is Peptide methionine sulfoxide reductase MsrA, found in Streptococcus equi subsp. zooepidemicus (strain H70).